The sequence spans 151 residues: MGRMHSRGKGISSSALPYKRTPPSWLKTAASDVEEMIMKAAKKGQMPSQIGVVLRDQHGIPLVKSVTGSKILRILKAHGLAPEIPEDLYFLIKKAVAIRKHLERNRKDKDSKFRLILVESRIHRLARYYKRTKKLPPTWKYESTTASTLVA.

Belongs to the universal ribosomal protein uS15 family.

The chain is Small ribosomal subunit protein uS15y from Oryza sativa subsp. japonica (Rice).